The sequence spans 376 residues: Heat-inducible transcription repressor HrcA (376 aa).

Belongs to the HrcA family.

Negative regulator of class I heat shock genes (grpE-dnaK-dnaJ and groELS operons). Prevents heat-shock induction of these operons. The chain is Heat-inducible transcription repressor HrcA from Nostoc punctiforme (strain ATCC 29133 / PCC 73102).